Reading from the N-terminus, the 326-residue chain is Apoptosis facilitator Bcl-2-like protein 14 (326 aa).

S44 is modified (phosphoserine). Residues T99 to Q127 form a disordered region. Residues I211–E225 carry the BH3 motif. Residues W307–W314 carry the BH2 motif.

The protein belongs to the Bcl-2 family. In terms of processing, phosphorylated by MELK, leading to inhibit its pro-apoptotic function.

Its subcellular location is the cytoplasm. In terms of biological role, plays a role in apoptosis. The sequence is that of Apoptosis facilitator Bcl-2-like protein 14 (Bcl2l14) from Rattus norvegicus (Rat).